A 1744-amino-acid chain; its full sequence is Retrotransposon-like protein 1 (1744 aa).

Disordered stretches follow at residues M1 to E416, R823 to G859, and S1287 to S1439. Low complexity predominate over residues S19 to S30. Over residues N31–S40 the composition is skewed to polar residues. Low complexity predominate over residues G41 to A80. The segment covering D269–G318 has biased composition (polar residues). Positions S332–E361 are enriched in low complexity. 3 stretches are compositionally biased toward acidic residues: residues S385–E407, G837–P846, and E1291–V1437. A run of 2 helical transmembrane segments spans residues F1473–L1493 and L1520–L1540.

Expressed in placenta and in various tissues in late-fetal stage.

The protein localises to the membrane. Plays an essential role in capillaries endothelial cells for the maintenance of feto-maternal interface and for development of the placenta. The polypeptide is Retrotransposon-like protein 1 (Rtl1) (Mus musculus (Mouse)).